An 845-amino-acid chain; its full sequence is Protein translocase subunit SecA 1 (845 aa).

Residues glutamine 91, 109–113 (GEGKT), and aspartate 498 each bind ATP. Residues 795 to 845 (TDFGTAQHVSAEDGKEKAKKQPIVKGDKVGRNDPCPCGSGKKYKNCHGKEE) are disordered. The Zn(2+) site is built by cysteine 829, cysteine 831, cysteine 840, and histidine 841. Basic residues predominate over residues 835–845 (KKYKNCHGKEE).

The protein belongs to the SecA family. In terms of assembly, monomer and homodimer. Part of the essential Sec protein translocation apparatus which comprises SecA, SecYEG and auxiliary proteins SecDF. Other proteins may also be involved. It depends on Zn(2+) as a cofactor.

It localises to the cell membrane. It is found in the cytoplasm. The catalysed reaction is ATP + H2O + cellular proteinSide 1 = ADP + phosphate + cellular proteinSide 2.. Functionally, part of the Sec protein translocase complex. Interacts with the SecYEG preprotein conducting channel. Has a central role in coupling the hydrolysis of ATP to the transfer of proteins into and across the cell membrane, serving as an ATP-driven molecular motor driving the stepwise translocation of polypeptide chains across the membrane. This is Protein translocase subunit SecA 1 from Staphylococcus haemolyticus (strain JCSC1435).